The following is a 338-amino-acid chain: 1-aminocyclopropane-1-carboxylate deaminase (338 aa).

Lysine 51 is subject to N6-(pyridoxal phosphate)lysine. Serine 78 serves as the catalytic Nucleophile.

It belongs to the ACC deaminase/D-cysteine desulfhydrase family. In terms of assembly, homotrimer. Pyridoxal 5'-phosphate is required as a cofactor.

It catalyses the reaction 1-aminocyclopropane-1-carboxylate + H2O = 2-oxobutanoate + NH4(+). Functionally, catalyzes a cyclopropane ring-opening reaction, the irreversible conversion of 1-aminocyclopropane-1-carboxylate (ACC) to ammonia and alpha-ketobutyrate. Allows growth on ACC as a nitrogen source. The protein is 1-aminocyclopropane-1-carboxylate deaminase of Burkholderia orbicola (strain MC0-3).